A 207-amino-acid chain; its full sequence is Dephospho-CoA kinase (207 aa).

The 200-residue stretch at 4 to 203 (VIGLTGGIAS…EEGYIEKPNY (200 aa)) folds into the DPCK domain. Residue 12-17 (ASGKST) coordinates ATP.

It belongs to the CoaE family.

The protein resides in the cytoplasm. It carries out the reaction 3'-dephospho-CoA + ATP = ADP + CoA + H(+). The protein operates within cofactor biosynthesis; coenzyme A biosynthesis; CoA from (R)-pantothenate: step 5/5. Catalyzes the phosphorylation of the 3'-hydroxyl group of dephosphocoenzyme A to form coenzyme A. This Staphylococcus aureus (strain MRSA252) protein is Dephospho-CoA kinase.